We begin with the raw amino-acid sequence, 210 residues long: Large ribosomal subunit protein bL25 (210 aa).

Belongs to the bacterial ribosomal protein bL25 family. CTC subfamily. As to quaternary structure, part of the 50S ribosomal subunit; part of the 5S rRNA/L5/L18/L25 subcomplex. Contacts the 5S rRNA. Binds to the 5S rRNA independently of L5 and L18.

This is one of the proteins that binds to the 5S RNA in the ribosome where it forms part of the central protuberance. This chain is Large ribosomal subunit protein bL25, found in Frankia casuarinae (strain DSM 45818 / CECT 9043 / HFP020203 / CcI3).